Reading from the N-terminus, the 295-residue chain is Probable alpha-L-glutamate ligase 1 (295 aa).

An ATP-grasp domain is found at 104 to 287; that stretch reads MQLLSRKGIG…VANAIIEFIE (184 aa). ATP-binding positions include lysine 141, 178-179, aspartate 187, and 211-213; these read EY and RSN. Mg(2+) contacts are provided by aspartate 248, glutamate 260, and asparagine 262. Mn(2+)-binding residues include aspartate 248, glutamate 260, and asparagine 262.

This sequence belongs to the RimK family. Mg(2+) is required as a cofactor. Mn(2+) serves as cofactor.

The protein is Probable alpha-L-glutamate ligase 1 of Shewanella denitrificans (strain OS217 / ATCC BAA-1090 / DSM 15013).